The primary structure comprises 400 residues: Elongation factor Tu (400 aa).

Positions 10–208 (KPHVNVGTIG…AMDNYIPDPQ (199 aa)) constitute a tr-type G domain. Positions 19–26 (GHIDHGKS) are G1. 19-26 (GHIDHGKS) contacts GTP. Residue Ser-26 participates in Mg(2+) binding. The tract at residues 60–64 (GITIN) is G2. Residues 81-84 (DCPG) form a G3 region. GTP is bound by residues 81 to 85 (DCPGH) and 136 to 139 (NKTD). Positions 136–139 (NKTD) are G4. The G5 stretch occupies residues 174–176 (SAL).

The protein belongs to the TRAFAC class translation factor GTPase superfamily. Classic translation factor GTPase family. EF-Tu/EF-1A subfamily. Monomer.

Its subcellular location is the cytoplasm. The enzyme catalyses GTP + H2O = GDP + phosphate + H(+). Its function is as follows. GTP hydrolase that promotes the GTP-dependent binding of aminoacyl-tRNA to the A-site of ribosomes during protein biosynthesis. This chain is Elongation factor Tu, found in Thermotoga maritima (strain ATCC 43589 / DSM 3109 / JCM 10099 / NBRC 100826 / MSB8).